The following is a 212-amino-acid chain: Pyrrolidone-carboxylate peptidase (212 aa).

Catalysis depends on residues glutamate 80, cysteine 143, and histidine 165.

It belongs to the peptidase C15 family. As to quaternary structure, homotetramer.

It localises to the cytoplasm. The catalysed reaction is Release of an N-terminal pyroglutamyl group from a polypeptide, the second amino acid generally not being Pro.. Removes 5-oxoproline from various penultimate amino acid residues except L-proline. This is Pyrrolidone-carboxylate peptidase from Vibrio campbellii (strain ATCC BAA-1116).